Here is a 342-residue protein sequence, read N- to C-terminus: Dihydroorotate dehydrogenase (quinone) (342 aa).

Residues A60–K64 and T84 each bind FMN. K64 is a binding site for substrate. N109–F113 lines the substrate pocket. The FMN site is built by N137 and N170. N170 serves as a coordination point for substrate. S173 functions as the Nucleophile in the catalytic mechanism. N175 serves as a coordination point for substrate. Residues K215 and T243 each contribute to the FMN site. N244–T245 is a binding site for substrate. Residues G266, G295, and Y316 to S317 contribute to the FMN site.

The protein belongs to the dihydroorotate dehydrogenase family. Type 2 subfamily. As to quaternary structure, monomer. The cofactor is FMN.

It is found in the cell membrane. The enzyme catalyses (S)-dihydroorotate + a quinone = orotate + a quinol. The protein operates within pyrimidine metabolism; UMP biosynthesis via de novo pathway; orotate from (S)-dihydroorotate (quinone route): step 1/1. In terms of biological role, catalyzes the conversion of dihydroorotate to orotate with quinone as electron acceptor. This chain is Dihydroorotate dehydrogenase (quinone), found in Nitrosomonas eutropha (strain DSM 101675 / C91 / Nm57).